The primary structure comprises 64 residues: DNA gyrase inhibitor YacG (64 aa).

Zn(2+) contacts are provided by C9, C12, C28, and C32.

It belongs to the DNA gyrase inhibitor YacG family. Interacts with GyrB. The cofactor is Zn(2+).

Functionally, inhibits all the catalytic activities of DNA gyrase by preventing its interaction with DNA. Acts by binding directly to the C-terminal domain of GyrB, which probably disrupts DNA binding by the gyrase. The chain is DNA gyrase inhibitor YacG from Enterobacter sp. (strain 638).